We begin with the raw amino-acid sequence, 527 residues long: Probable feruloyl esterase B-2 (527 aa).

The signal sequence occupies residues 1 to 19 (MAPIHYLLPIITLGSAALA). Disulfide bonds link Cys28/Cys75 and Cys63/Cys114. Asn53, Asn85, Asn98, Asn138, and Asn180 each carry an N-linked (GlcNAc...) asparagine glycan. 4 disulfide bridges follow: Cys187–Cys441, Cys256–Cys273, Cys282–Cys291, and Cys503–Cys525. Ser188 serves as the catalytic Acyl-ester intermediate. Positions 257, 260, 262, 264, and 266 each coordinate Ca(2+). 2 N-linked (GlcNAc...) asparagine glycosylation sites follow: Asn311 and Asn355. Active-site charge relay system residues include Asp400 and His440. N-linked (GlcNAc...) asparagine glycosylation is present at Asn516.

This sequence belongs to the tannase family.

The protein localises to the secreted. It catalyses the reaction feruloyl-polysaccharide + H2O = ferulate + polysaccharide.. Functionally, involved in degradation of plant cell walls. Hydrolyzes the feruloyl-arabinose ester bond in arabinoxylans as well as the feruloyl-galactose and feruloyl-arabinose ester bonds in pectin. This chain is Probable feruloyl esterase B-2 (faeB-2), found in Aspergillus terreus (strain NIH 2624 / FGSC A1156).